A 139-amino-acid chain; its full sequence is Holo-[acyl-carrier-protein] synthase (139 aa).

The Mg(2+) site is built by Asp8 and Glu61.

This sequence belongs to the P-Pant transferase superfamily. AcpS family. It depends on Mg(2+) as a cofactor.

The protein localises to the cytoplasm. The enzyme catalyses apo-[ACP] + CoA = holo-[ACP] + adenosine 3',5'-bisphosphate + H(+). Functionally, transfers the 4'-phosphopantetheine moiety from coenzyme A to a Ser of acyl-carrier-protein. The polypeptide is Holo-[acyl-carrier-protein] synthase (Rhodopseudomonas palustris (strain BisA53)).